Here is a 483-residue protein sequence, read N- to C-terminus: Putative (R)-citramalate synthase CimA (483 aa).

Positions 1–245 (MRDGEQTPGV…DTGIKHEQIY (245 aa)) constitute a Pyruvate carboxyltransferase domain.

It belongs to the alpha-IPM synthase/homocitrate synthase family. As to quaternary structure, homodimer.

The enzyme catalyses pyruvate + acetyl-CoA + H2O = (3R)-citramalate + CoA + H(+). It functions in the pathway amino-acid biosynthesis; L-isoleucine biosynthesis; 2-oxobutanoate from pyruvate: step 1/3. Functionally, catalyzes the condensation of pyruvate and acetyl-coenzyme A to form (R)-citramalate. The chain is Putative (R)-citramalate synthase CimA from Methanosarcina acetivorans (strain ATCC 35395 / DSM 2834 / JCM 12185 / C2A).